Reading from the N-terminus, the 421-residue chain is Probable sugar-binding periplasmic protein (421 aa).

Positions 1–27 (MHKLLKLAAMGTAACALLAGMAPVANA) are cleaved as a signal peptide.

Belongs to the bacterial solute-binding protein 1 family.

Its subcellular location is the periplasm. In terms of biological role, part of a binding-protein-dependent transport system for a sugar. The sequence is that of Probable sugar-binding periplasmic protein from Brucella suis biovar 1 (strain 1330).